The primary structure comprises 58 residues: Small ribosomal subunit protein bS21 (58 aa).

A compositionally biased stretch (basic and acidic residues) spans 32–42; that stretch reads VRKREHYEKPS. The segment at 32 to 58 is disordered; it reads VRKREHYEKPSVKKKKKSEAARKRKFK. The segment covering 43–58 has biased composition (basic residues); it reads VKKKKKSEAARKRKFK.

It belongs to the bacterial ribosomal protein bS21 family.

The polypeptide is Small ribosomal subunit protein bS21 (Clostridium botulinum (strain Okra / Type B1)).